Here is a 257-residue protein sequence, read N- to C-terminus: Protein YIPF5 (257 aa).

The Cytoplasmic segment spans residues 1 to 124 (MSGFENLNTD…KVADGSIMNE (124 aa)). The segment at 75-106 (PASPQPFYGNSFEDEPPLLEELGINFDHIWQK) is interaction with Sec23. A helical transmembrane segment spans residues 125 to 145 (TDLAGPMVFCLAFGATLLLAG). Residue Lys146 is a topological domain, lumenal. Residues 147-167 (IQFGYVYGISAIGCLGMFCLL) traverse the membrane as a helical segment. Over 168 to 173 (NLMSMT) the chain is Cytoplasmic. The chain crosses the membrane as a helical span at residues 174 to 194 (GVSFGCVASVLGYCLLPMILL). Topologically, residues 195-196 (SS) are lumenal. The helical transmembrane segment at 197 to 217 (FAVIFSLQGMVGIILTAGIIG) threads the bilayer. Over 218-236 (WCSFSASKIFISALAMEGQ) the chain is Cytoplasmic. A helical transmembrane segment spans residues 237–257 (QLLVAYPCALLYGVFALISVF).

Belongs to the YIP1 family. As to quaternary structure, interacts with the COPII coat components Sec23 (SEC23A and/or SEC23B) and Sec24 (SEC24A and/or SEC24B). Interacts with YIF1A. May interact with RAB1A. Interacts with YIPF3 and YIPF4.

The protein localises to the endoplasmic reticulum membrane. Its subcellular location is the golgi apparatus. The protein resides in the cis-Golgi network membrane. It is found in the cytoplasmic vesicle. It localises to the COPII-coated vesicle. Plays a role in transport between endoplasmic reticulum and Golgi. In pancreatic beta cells, required to transport proinsulin from endoplasmic reticulum into the Golgi. The chain is Protein YIPF5 (YIPF5) from Macaca fascicularis (Crab-eating macaque).